We begin with the raw amino-acid sequence, 289 residues long: Oxaloacetate decarboxylase 1 (289 aa).

Residue Ser-50 coordinates substrate. Asp-88 contacts Mg(2+). 2 residues coordinate substrate: Arg-159 and His-235.

Belongs to the isocitrate lyase/PEP mutase superfamily. Oxaloacetate decarboxylase family. Homotetramer; dimer of dimers. It depends on Mg(2+) as a cofactor.

The enzyme catalyses oxaloacetate + H(+) = pyruvate + CO2. In terms of biological role, catalyzes the decarboxylation of oxaloacetate into pyruvate. Seems to play a role in maintaining cellular concentrations of bicarbonate and pyruvate. In Pseudomonas putida (strain W619), this protein is Oxaloacetate decarboxylase 1.